A 150-amino-acid polypeptide reads, in one-letter code: U1 small nuclear ribonucleoprotein C (150 aa).

The Matrin-type zinc-finger motif lies at tyrosine 4–aspartate 36. Positions serine 66–proline 127 are disordered. Positions aspartate 80–lysine 92 are enriched in basic and acidic residues. Residues asparagine 103–methionine 112 show a composition bias toward acidic residues.

It belongs to the U1 small nuclear ribonucleoprotein C family. In terms of assembly, U1 snRNP is composed of the 7 core Sm proteins B/B', D1, D2, D3, E, F and G that assemble in a heptameric protein ring on the Sm site of the small nuclear RNA to form the core snRNP, and at least 3 U1 snRNP-specific proteins U1-70K, U1-A and U1-C. U1-C interacts with U1 snRNA and the 5' splice-site region of the pre-mRNA.

It localises to the nucleus. In terms of biological role, component of the spliceosomal U1 snRNP, which is essential for recognition of the pre-mRNA 5' splice-site and the subsequent assembly of the spliceosome. U1-C is directly involved in initial 5' splice-site recognition for both constitutive and regulated alternative splicing. The interaction with the 5' splice-site seems to precede base-pairing between the pre-mRNA and the U1 snRNA. Stimulates commitment or early (E) complex formation by stabilizing the base pairing of the 5' end of the U1 snRNA and the 5' splice-site region. In Candida albicans (strain WO-1) (Yeast), this protein is U1 small nuclear ribonucleoprotein C.